Reading from the N-terminus, the 357-residue chain is Intracellular hyaluronan-binding protein 4 (357 aa).

Disordered stretches follow at residues 56–116 (VVAR…HKTA), 150–186 (ERPRGCGRGRGGMQGRGRGGGINKSFDGFDQRGKREF), and 313–357 (PGCG…PALT). Residues 96 to 115 (PKQEECGGKDNSRAEKEHKT) are compositionally biased toward basic and acidic residues. The segment covering 155–171 (CGRGRGGMQGRGRGGGI) has biased composition (gly residues). Positions 176–186 (DGFDQRGKREF) are enriched in basic and acidic residues. Acidic residues predominate over residues 348–357 (DDPEDFPALT).

This sequence belongs to the SERBP1-HABP4 family. Associates with ribosomes; promoting ribosome stabilization. Interacts with EEF2/eEF2; promoting ribosome stabilization.

The protein resides in the nucleus. It is found in the cytoplasm. Its subcellular location is the stress granule. It localises to the sarcoplasm. The protein localises to the nuclear body. The protein resides in the nucleolus. It is found in the nucleus speckle. Its subcellular location is the cajal body. It localises to the gem. Functionally, ribosome-binding protein that promotes ribosome hibernation, a process during which ribosomes are stabilized in an inactive state and preserved from proteasomal degradation. Acts via its association with EEF2/eEF2 factor at the A-site of the ribosome, promoting ribosome stabilization in an inactive state compatible with storage. Plays a key role in ribosome hibernation in the mature egg by promoting ribosome stabilization. Ribosomes, which are produced in large quantities during oogenesis, are stored and translationally repressed in the egg and early embryo. In Gallus gallus (Chicken), this protein is Intracellular hyaluronan-binding protein 4.